A 659-amino-acid polypeptide reads, in one-letter code: Nicastrin (659 aa).

A signal peptide spans 1–22; that stretch reads MKIKNYFIIVFIIIVLSTDVIS. The Extracellular segment spans residues 23–627; sequence SQSSIEDKMY…LFQVGSYANE (605 aa). 9 N-linked (GlcNAc...) asparagine glycosylation sites follow: asparagine 94, asparagine 172, asparagine 305, asparagine 389, asparagine 451, asparagine 475, asparagine 550, asparagine 553, and asparagine 600. The chain crosses the membrane as a helical span at residues 628–648; it reads IWFLVSGLIELLLSVGIIFYI. Over 649–659 the chain is Cytoplasmic; sequence KKYLSKRYKLL.

It belongs to the nicastrin family. Homodimer. Component of the gamma-secretase complex, a complex composed of a presenilin homodimer, nicastrin, aph1 and pen2.

The protein resides in the membrane. Functionally, essential subunit of the gamma-secretase complex, an endoprotease complex that catalyzes the intramembrane cleavage of integral membrane proteins such as Notch receptors and APP (amyloid-beta precursor protein). It probably represents a stabilizing cofactor required for the assembly of the gamma-secretase complex. The protein is Nicastrin (ncstn) of Dictyostelium discoideum (Social amoeba).